The sequence spans 639 residues: Pheromone B alpha 1 receptor (639 aa).

The next 7 membrane-spanning stretches (helical) occupy residues 8 to 28 (LFPI…PWHL), 37 to 57 (FFMM…VAWA), 70 to 90 (ISIR…LCII), 113 to 133 (ILVD…LQYI), 163 to 183 (VWPV…LLQF), 209 to 229 (MALA…VIVL), and 272 to 292 (LTRW…GFAE). 4 disordered regions span residues 375-416 (PRPM…SSPI), 490-516 (TVPH…SSSA), 532-563 (SADV…RLPS), and 611-639 (TTAG…RASV). Over residues 383–398 (SSSGFSSSDSTRFGSS) the composition is skewed to low complexity. Composition is skewed to low complexity over residues 541 to 551 (GSSAGGVASTS) and 611 to 621 (TTAGAPATTTP).

Belongs to the G-protein coupled receptor 4 family.

The protein resides in the membrane. Functionally, receptor for the BAP1 pheromone, a prenylated mating factor. Has a role in the initiation of B-regulated nuclear migration. In Schizophyllum commune (Split gill fungus), this protein is Pheromone B alpha 1 receptor (BAR1).